Reading from the N-terminus, the 58-residue chain is Large ribosomal subunit protein bL32 (58 aa).

The protein belongs to the bacterial ribosomal protein bL32 family.

The sequence is that of Large ribosomal subunit protein bL32 from Prochlorococcus marinus (strain MIT 9303).